Reading from the N-terminus, the 854-residue chain is Disrupted in schizophrenia 1 protein (854 aa).

The segment covering 1–18 (MPGGGPQGAPAAAGGGGV) has biased composition (gly residues). Disordered regions lie at residues 1 to 24 (MPGGGPQGAPAAAGGGGVSHRAGS), 179 to 205 (SAELSSNSCSPGCGPEVPPTPPGSHSA), 221 to 257 (GERGEAEGCPPSREAESHCQSPQEMGAKAASLDGPHE), and 278 to 323 (AQAA…SGDA). The interval 1-292 (MPGGGPQGAP…NSSRPERDMH (292 aa)) is interaction with MAP1A. The Interaction with FBXW7 signature appears at 197-203 (PTPPGSH). Residues 285-295 (SRPERDMHSLP) are compositionally biased toward basic and acidic residues. The tract at residues 293–696 (SLPDMDPGSS…LGKVWEADLE (404 aa)) is interaction with TRAF3IP1. Over residues 296–309 (DMDPGSSSSLDPSL) the composition is skewed to low complexity. Coiled-coil stretches lie at residues 366–394 (ENDDYDKAETLQQRLEDLEQEKISLHFQL), 452–505 (ITRR…CDLT), and 602–666 (WTAK…SVKE). K372 is covalently cross-linked (Glycyl lysine isopeptide (Lys-Gly) (interchain with G-Cter in ubiquitin)). The interval 440-597 (LEPTAQDSLH…LLEAKMHAIS (158 aa)) is required for localization to punctate cytoplasmic foci. The segment at 446 to 854 (DSLHVSITRR…MTAGVHEAQA (409 aa)) is necessary and sufficient for interaction with PCNT and localization at the centrosome. The segment at 598–854 (GNHFWTAKDL…MTAGVHEAQA (257 aa)) is interaction with ATF4 and ATF5. The segment at 716 to 739 (VEDERQMDDLEGAAPPIPPRLHSE) is disordered. The interval 727–854 (GAAPPIPPRL…MTAGVHEAQA (128 aa)) is interaction with PAFAH1B1. A coiled-coil region spans residues 802–830 (SHDEDLIQSLRRELQMVKETLQAMILQLQ). The segment at 802–835 (SHDEDLIQSLRRELQMVKETLQAMILQLQPAKEA) is interaction with NDEL1.

In terms of assembly, interacts with NDEL1. Interacts with CCDC88A (via C-terminus); the interaction is direct. Interacts with GSK3B. Interacts with tubulin alpha, ACTN2, ANKHD1, ATF4, ATF5, CEP63, EIF3S3, MAP1A, NDEL1, PAFAH1B1, RANBP9, SPTBN4, SYNE1 and TRAF3IP1. Interaction with microtubules may be mediated in part by TRAF3IP1. Interacts (via C-terminal) with PCNT. Interacts with CHCHD6. Interacts with CCDC141. Interacts with FBXW7, the substrate-recognition component of a SCF (SKP1-CUL1-F-box protein) E3 ubiquitin-protein ligase complex; the interaction targets DISC1 for proteasomal degradation. Interacts with ZNF365. Interacts with ATF4; inhibiting ATF4 transcription factor activity by disrupting ATF4 dimerization and DNA-binding. Interacts with PDE4B (isoform PDE4B5). In terms of processing, ubiquitinated. Ubiquitination with 'Lys-48'-linked polyubiquitin chains leads to its proteasomal degradation. Ubiquitous. Highly expressed in the dentate gyrus of the hippocampus. Also expressed in the temporal and parahippocampal cortices and cells of the white matter.

It localises to the cytoplasm. The protein localises to the cytoskeleton. The protein resides in the mitochondrion. It is found in the microtubule organizing center. Its subcellular location is the centrosome. It localises to the postsynaptic density. Its function is as follows. Involved in the regulation of multiple aspects of embryonic and adult neurogenesis. Required for neural progenitor proliferation in the ventrical/subventrical zone during embryonic brain development and in the adult dentate gyrus of the hippocampus. Participates in the Wnt-mediated neural progenitor proliferation as a positive regulator by modulating GSK3B activity and CTNNB1 abundance. Plays a role as a modulator of the AKT-mTOR signaling pathway controlling the tempo of the process of newborn neurons integration during adult neurogenesis, including neuron positioning, dendritic development and synapse formation. Inhibits the activation of AKT-mTOR signaling upon interaction with CCDC88A. Regulates the migration of early-born granule cell precursors toward the dentate gyrus during the hippocampal development. Inhibits ATF4 transcription factor activity in neurons by disrupting ATF4 dimerization and DNA-binding. Plays a role, together with PCNT, in the microtubule network formation. The chain is Disrupted in schizophrenia 1 protein from Homo sapiens (Human).